Here is a 59-residue protein sequence, read N- to C-terminus: Salivary thrombin inhibitor XC-43 (59 aa).

An N-terminal signal peptide occupies residues 1-23; the sequence is MNLQFLFIFIAFCVMLFAQIVTA.

Interacts with human F2 (thrombin). Salivary gland (at protein level).

The protein localises to the secreted. Its function is as follows. Anticoagulant protein that acts as a competitive inhibitor of host thrombin. Inhibits thrombin-mediated host platelet aggregation. In Xenopsylla cheopis (Oriental rat flea), this protein is Salivary thrombin inhibitor XC-43.